The chain runs to 681 residues: Envelope glycoprotein (681 aa).

A signal peptide spans 1-18; sequence MKTIYFLISLILIQSIKT. Topologically, residues 19–648 are extracellular; the sequence is LPVLEIASNS…GLGGKWWTSD (630 aa). Positions 38 to 188 are receptor-binding; that stretch reads SGTLQKTEDV…FSRQGQGYRH (151 aa). 7 N-linked (GlcNAc...) asparagine; by host glycosylation sites follow: asparagine 94, asparagine 171, asparagine 190, asparagine 202, asparagine 207, asparagine 219, and asparagine 223. The interval 223–428 is disordered; it reads NQTCPPSLKP…PDSSPTTRPP (206 aa). 2 stretches are compositionally biased toward polar residues: residues 236 to 260 and 278 to 315; these read PTVT…MNPS and PHTT…TNPS. The mucin-like region stretch occupies residues 277–455; it reads GPHTTLNVVT…PFLDGLINTE (179 aa). 10 N-linked (GlcNAc...) asparagine; by host glycosylation sites follow: asparagine 310, asparagine 323, asparagine 336, asparagine 350, asparagine 360, asparagine 364, asparagine 381, asparagine 397, asparagine 475, and asparagine 487. Residues 327 to 347 are compositionally biased toward low complexity; it reads PTTQPATLLNNTNTTPTYNTL. Polar residues-rich tracts occupy residues 348–365 and 373–394; these read KYNL…TNND and SEQT…TTGQ. The segment covering 395-428 has biased composition (low complexity); it reads DTNSTTNIIMTTSDITSKHPTNSSPDSSPTTRPP. Residues 529 to 549 are fusion peptide; sequence GLSWIPFFGPGIEGLYTAGLI. N-linked (GlcNAc...) asparagine; by host glycans are attached at residues asparagine 564 and asparagine 619. A helical transmembrane segment spans residues 649 to 669; sequence WGVLTNLGILLLLSIAVLIAL. Topologically, residues 670 to 681 are cytoplasmic; the sequence is SCICRIFTKYIG. S-palmitoyl cysteine; by host attachment occurs at residues cysteine 671 and cysteine 673.

Belongs to the filoviruses glycoprotein family. As to quaternary structure, homotrimer; each monomer consists of a GP1 and a GP2 subunit linked by disulfide bonds. The resulting peplomers (GP1,2) protrude from the virus surface as spikes. GP1,2 interacts with human CD209 and CLEC4M (collectively referred to as DC-SIGN(R)). Asialoglycoprotein receptor (ASGP-R) may be a liver-specific receptor for GP1,2. Members of the Tyro3 receptor tyrosine kinase family may be cell entry factors interacting with GP1,2. In terms of processing, N-glycosylated. Post-translationally, O-glycosylated in the mucin-like region. Specific enzymatic cleavages in vivo yield mature proteins. The precursor is processed into GP1 and GP2 by host cell furin in the trans Golgi, and maybe by other host proteases, to yield the mature GP1 and GP2 proteins. The cleavage site corresponds to the furin optimal cleavage sequence [KR]-X-[KR]-R. In terms of processing, GP1 is phosphorylated on serine residues between residues 260 and 273.

The protein resides in the virion membrane. It is found in the host cell membrane. GP1 is responsible for binding to the receptor(s) on target cells. Interacts with CD209/DC-SIGN and CLEC4M/DC-SIGNR which act as cofactors for virus entry into the host cell. Binding to CD209 and CLEC4M, which are respectively found on dendritic cells (DCs), and on endothelial cells of liver sinusoids and lymph node sinuses, facilitate infection of macrophages and endothelial cells. These interactions not only facilitate virus cell entry, but also allow capture of viral particles by DCs and subsequent transmission to susceptible cells without DCs infection (trans infection). Functionally, GP2 acts as a class I viral fusion protein. Under the current model, the protein has at least 3 conformational states: pre-fusion native state, pre-hairpin intermediate state, and post-fusion hairpin state. During viral and target cell membrane fusion, the coiled coil regions (heptad repeats) assume a trimer-of-hairpins structure, positioning the fusion peptide in close proximity to the C-terminal region of the ectodomain. The formation of this structure appears to drive apposition and subsequent fusion of viral and target cell membranes. Responsible for penetration of the virus into the cell cytoplasm by mediating the fusion of the membrane of the endocytosed virus particle with the endosomal membrane. Low pH in endosomes induces an irreversible conformational change in GP2, releasing the fusion hydrophobic peptide. The protein is Envelope glycoprotein (GP) of Chlorocebus aethiops (Green monkey).